The following is a 351-amino-acid chain: L-threonine 3-dehydrogenase (351 aa).

Residue Cys39 participates in Zn(2+) binding. Active-site charge relay system residues include Thr41 and His44. Residues His64, Glu65, Cys94, Cys97, Cys100, and Cys108 each contribute to the Zn(2+) site. Residues Ile176, Asp196, Arg201, 271 to 273 (LGI), and 295 to 296 (IY) each bind NAD(+).

The protein belongs to the zinc-containing alcohol dehydrogenase family. As to quaternary structure, homotetramer. Requires Zn(2+) as cofactor.

The protein resides in the cytoplasm. The enzyme catalyses L-threonine + NAD(+) = (2S)-2-amino-3-oxobutanoate + NADH + H(+). It functions in the pathway amino-acid degradation; L-threonine degradation via oxydo-reductase pathway; glycine from L-threonine: step 1/2. Catalyzes the NAD(+)-dependent oxidation of L-threonine to 2-amino-3-ketobutyrate. This chain is L-threonine 3-dehydrogenase, found in Francisella tularensis subsp. novicida (strain U112).